Here is a 508-residue protein sequence, read N- to C-terminus: Cytochrome P450 4A12B (508 aa).

A signal peptide spans 1-37 (MSASALSSIRFPGSISEYLQVASVLSLLLLLFKTAQL). Residues E319 and C455 each coordinate heme.

Belongs to the cytochrome P450 family. Requires heme as cofactor. As to expression, expressed in lung, but almost undetectable in the kidneys of five different strains.

It is found in the endoplasmic reticulum membrane. Its subcellular location is the microsome membrane. The enzyme catalyses an organic molecule + reduced [NADPH--hemoprotein reductase] + O2 = an alcohol + oxidized [NADPH--hemoprotein reductase] + H2O + H(+). It carries out the reaction dodecanoate + reduced [NADPH--hemoprotein reductase] + O2 = 11-hydroxydodecanoate + oxidized [NADPH--hemoprotein reductase] + H2O + H(+). The catalysed reaction is dodecanoate + reduced [NADPH--hemoprotein reductase] + O2 = 12-hydroxydodecanoate + oxidized [NADPH--hemoprotein reductase] + H2O + H(+). It catalyses the reaction (5Z,8Z,11Z,14Z)-eicosatetraenoate + reduced [NADPH--hemoprotein reductase] + O2 = 18-hydroxy-(5Z,8Z,11Z,14Z)-eicosatetraenoate + oxidized [NADPH--hemoprotein reductase] + H2O + H(+). The enzyme catalyses (5Z,8Z,11Z,14Z)-eicosatetraenoate + reduced [NADPH--hemoprotein reductase] + O2 = 19-hydroxy-(5Z,8Z,11Z,14Z)-eicosatetraenoate + oxidized [NADPH--hemoprotein reductase] + H2O + H(+). It carries out the reaction (5Z,8Z,11Z,14Z)-eicosatetraenoate + reduced [NADPH--hemoprotein reductase] + O2 = 20-hydroxy-(5Z,8Z,11Z,14Z)-eicosatetraenoate + oxidized [NADPH--hemoprotein reductase] + H2O + H(+). The catalysed reaction is (5Z,8Z,11Z,14Z,17Z)-eicosapentaenoate + reduced [NADPH--hemoprotein reductase] + O2 = 19-hydroxy-(5Z,8Z,11Z,14Z,17Z)-eicosapentaenoate + oxidized [NADPH--hemoprotein reductase] + H2O + H(+). It catalyses the reaction (5Z,8Z,11Z,14Z,17Z)-eicosapentaenoate + reduced [NADPH--hemoprotein reductase] + O2 = 20-hydroxy-(5Z,8Z,11Z,14Z,17Z)-eicosapentaenoate + oxidized [NADPH--hemoprotein reductase] + H2O + H(+). The enzyme catalyses (5Z,8Z,11Z,14Z,17Z)-eicosapentaenoate + reduced [NADPH--hemoprotein reductase] + O2 = (17S,18R)-epoxy-(5Z,8Z,11Z,14Z)-eicosatetraenoate + oxidized [NADPH--hemoprotein reductase] + H2O + H(+). It carries out the reaction (5Z,8Z,11Z,14Z,17Z)-eicosapentaenoate + reduced [NADPH--hemoprotein reductase] + O2 = (17R,18S)-epoxy-(5Z,8Z,11Z,14Z)-eicosatetraenoate + oxidized [NADPH--hemoprotein reductase] + H2O + H(+). It participates in lipid metabolism; fatty acid metabolism. Its activity is regulated as follows. Activated by cytochrome b5. The Vmax almost doubles in the presence of cytochrome b5. Its function is as follows. A cytochrome P450 monooxygenase involved in the metabolism of fatty acids and their oxygenated derivatives (oxylipins). Mechanistically, uses molecular oxygen inserting one oxygen atom into a substrate, and reducing the second into a water molecule, with two electrons provided by NADPH via cytochrome P450 reductase (CPR; NADPH-ferrihemoprotein reductase). Catalyzes predominantly the oxidation of the terminal carbon (omega-oxidation) of saturated and unsaturated fatty acids. May act as a major omega-hydroxylase for dodecanoic (lauric) acid in kidney. Participates in omega-hydroxylation of (5Z,8Z,11Z,14Z)-eicosatetraenoic acid (arachidonate) to 20-hydroxyeicosatetraenoic acid (20-HETE), a signaling molecule acting both as vasoconstrictive and natriuretic with overall effect on arterial blood pressure. Acts as an omega-hydroxylase and epoxidase toward (5Z,8Z,11Z,14Z,17Z)-eicosapentaenoc acid (EPA). Catalyzes the epoxidation of the last double bond of EPA with no preferred stereoselectivity, producing both (R,S) and (S,R) stereoisomers. Can also catalyze the omega-1 and omega-2 oxidation of fatty acids with lower efficiency. This is Cytochrome P450 4A12B from Mus musculus (Mouse).